Here is a 130-residue protein sequence, read N- to C-terminus: Small ribosomal subunit protein uS9 (130 aa).

Belongs to the universal ribosomal protein uS9 family.

The protein is Small ribosomal subunit protein uS9 of Salmonella paratyphi A (strain AKU_12601).